A 421-amino-acid chain; its full sequence is Gamma-glutamyl phosphate reductase (421 aa).

It belongs to the gamma-glutamyl phosphate reductase family.

Its subcellular location is the cytoplasm. The catalysed reaction is L-glutamate 5-semialdehyde + phosphate + NADP(+) = L-glutamyl 5-phosphate + NADPH + H(+). Its pathway is amino-acid biosynthesis; L-proline biosynthesis; L-glutamate 5-semialdehyde from L-glutamate: step 2/2. Catalyzes the NADPH-dependent reduction of L-glutamate 5-phosphate into L-glutamate 5-semialdehyde and phosphate. The product spontaneously undergoes cyclization to form 1-pyrroline-5-carboxylate. The sequence is that of Gamma-glutamyl phosphate reductase from Leptospira biflexa serovar Patoc (strain Patoc 1 / ATCC 23582 / Paris).